Consider the following 398-residue polypeptide: 2-epi-5-epi-valiolone synthase (398 aa).

Residues D62, 93-96 (ETVK), 126-130 (GVLMD), 150-151 (TT), K163, K172, and 190-193 (FLAT) contribute to the NAD(+) site. Residue K163 is part of the active site. A divalent metal cation-binding residues include E205, H276, and H292.

The protein belongs to the sugar phosphate cyclases superfamily. EEVS family. NAD(+) serves as cofactor. Co(2+) is required as a cofactor.

The catalysed reaction is D-sedoheptulose 7-phosphate = 2-epi-5-epi-valiolone + phosphate. Catalyzes the cyclization of D-sedoheptulose 7-phosphate to 2-epi-5-epi-valiolone. Does not use ido-heptulose 7-phosphate and 3-deoxy-arabino-heptulosonate 7-phosphate. Involved in the biosynthesis of the acarviose moiety of the alpha-glucosidase inhibitor acarbose. The chain is 2-epi-5-epi-valiolone synthase from Actinoplanes sp. (strain ATCC 31044 / CBS 674.73 / SE50/110).